Consider the following 147-residue polypeptide: Ponticulin-like protein C1 (147 aa).

The signal sequence occupies residues 1-20 (MKFTKSLLLLIVAVFASSNA). The GPI-like-anchor amidated asparagine moiety is linked to residue asparagine 118. Asparagine 118 is a glycosylation site (N-linked (GlcNAc...) asparagine). Positions 119–147 (SSESDSSDSTRIGASFALAASVLLSMLAI) are cleaved as a propeptide — removed in mature form.

The protein belongs to the ponticulin family. Post-translationally, the GPI-like-anchor contains a phosphoceramide group, rather than a phosphatidyl group.

The protein localises to the cell membrane. In Dictyostelium discoideum (Social amoeba), this protein is Ponticulin-like protein C1 (ponC1).